Consider the following 425-residue polypeptide: L-lysine 2,3-aminomutase (425 aa).

The Radical SAM core domain maps to 113–325 (HRYPDRVLLL…GLRGHTSGYA (213 aa)). The [4Fe-4S] cluster site is built by C127, C131, and C134. Position 339 is an N6-(pyridoxal phosphate)lysine (K339).

This sequence belongs to the radical SAM superfamily. KamA family. Homotetramer. [4Fe-4S] cluster is required as a cofactor. Pyridoxal 5'-phosphate serves as cofactor.

It carries out the reaction L-lysine = (3S)-3,6-diaminohexanoate. It participates in amino-acid degradation; L-lysine degradation via acetate pathway. Catalyzes the interconversion of L-alpha-lysine and L-beta-lysine. In Fusobacterium nucleatum subsp. nucleatum (strain ATCC 25586 / DSM 15643 / BCRC 10681 / CIP 101130 / JCM 8532 / KCTC 2640 / LMG 13131 / VPI 4355), this protein is L-lysine 2,3-aminomutase.